The chain runs to 853 residues: MAVSLTEGVVMKMLNGEVTSETDMMPVLQVTELKLIQSKLHQNQESSNRYKFLLSDGTDLAAGMLNTSLNSLVNQGTIQLGSVIRLTHYICNLIQTRRIVVIMQLEVIVEKCNIIGNPKEPGHSSINPQRGGVNTQSNGGSEQQQARRSDVNGGRYGVSANSPQPQVVHNSSDAGRYCVSANSPQPQVVHSSSDAGRYGVSANSPQRQVVHNSPDAGRYGQPQVSQRYGTGSGYPETSPSTRPYVSSNAGYGGSRQDQPRAPTATTAYSRPVQSAYQPQQPPMYVNRGPVARNEAPPRINPIAALNPYQGRWTIKVRVTSKADLRRFNNPRGEGKLFSFDLLDADGGEIRVTCFNDAVDQFFDKIVVGNVYLISRGNLKPAQKNFNHLPNDYEIHLDSASTIQPCEDDGTIPRYHFHFRNIGDIENMENNSTTDVIGIVSSISPTVAIMRKNLTEVQKRSLQLKDMSGRSVEVTMWGNFCNAEGQKLQNLCDSGVFPVLALKAGRIGEFNGKQVSTIGASQFFIEPDFPEARELRQWYEREGRNAHFTSISREFSGVGRQEVRKVIAQIKDEKLGTSEKPDWITVCATISFMKVENFCYTACPIMNGDRPCSKKVTNNGDGTWRCEKCDKCVDECDYRYILQIQLQDHTDLTWATAFQEAGEEIMGMSAKDLYYVKYENQDEEKFEDIIRSVAFTKYIFKLKIKEETYSDEQRVKATVVKAEKLNYSSNTRFMLEAIDKLKIGDANSLPIKAESSNYRSDAFNSGVGTSGTRDTASVDARREFGLPAANQVGQYGNQYSSDARSLGGFTSCNVCRSNSHVSANCPTLMSEPQGQYMGGTNAGGGMPRQHVGSY.

Positions 118-282 are disordered; it reads PKEPGHSSIN…QSAYQPQQPP (165 aa). Composition is skewed to polar residues over residues 124 to 144, 159 to 173, 180 to 194, 201 to 211, 222 to 249, and 263 to 278; these read SSIN…SEQQ, SANS…NSSD, SANS…SSSD, SANSPQRQVVH, PQVS…SSNA, and TATT…AYQP. The segment at residues 312-399 is a DNA-binding region (OB); it reads WTIKVRVTSK…NDYEIHLDSA (88 aa). A C4-type zinc finger spans residues 602–628; sequence CPIMNGDRPCSKKVTNNGDGTWRCEKC.

This sequence belongs to the replication factor A protein 1 family. As to quaternary structure, heterotrimer of RPA1, RPA2 and RPA3 (canonical replication protein A complex).

Its subcellular location is the nucleus. Its function is as follows. Component of the replication protein A complex (RPA) required for DNA recombination, repair and replication. The activity of RPA is mediated by single-stranded DNA binding and protein interactions. Probably involved in repair of double-strand DNA breaks (DSBs) induced by genotoxic stresses. The chain is Replication protein A 70 kDa DNA-binding subunit C (RPA1C) from Arabidopsis thaliana (Mouse-ear cress).